We begin with the raw amino-acid sequence, 377 residues long: Histone deacetylase 8 (377 aa).

Positions 5 to 336 (RVDVFWHEGM…LHAMLEGVLK (332 aa)) are histone deacetylase. The active-site Proton donor/acceptor is the His-145. Zn(2+) contacts are provided by Asp-182, His-184, and Asp-274.

This sequence belongs to the histone deacetylase family. The cofactor is Zn(2+). In terms of tissue distribution, expressed in stems, leaves, flowers, siliques and mature seeds.

It localises to the nucleus. It is found in the cytoplasm. The enzyme catalyses N(6)-acetyl-L-lysyl-[histone] + H2O = L-lysyl-[histone] + acetate. Its function is as follows. Responsible for the deacetylation of lysine residues on the N-terminal part of the core histones (H2A, H2B, H3 and H4). Histone deacetylation gives a tag for epigenetic repression and plays an important role in transcriptional regulation, cell cycle progression and developmental events. Histone deacetylases act via the formation of large multiprotein complexes. In Arabidopsis thaliana (Mouse-ear cress), this protein is Histone deacetylase 8.